We begin with the raw amino-acid sequence, 118 residues long: Small ribosomal subunit protein uS13 (118 aa).

The tract at residues 94–118 (SLPVRGQRTKTNARTRKGPRRPIKR) is disordered.

This sequence belongs to the universal ribosomal protein uS13 family. In terms of assembly, part of the 30S ribosomal subunit. Forms a loose heterodimer with protein S19. Forms two bridges to the 50S subunit in the 70S ribosome.

Functionally, located at the top of the head of the 30S subunit, it contacts several helices of the 16S rRNA. In the 70S ribosome it contacts the 23S rRNA (bridge B1a) and protein L5 of the 50S subunit (bridge B1b), connecting the 2 subunits; these bridges are implicated in subunit movement. Contacts the tRNAs in the A and P-sites. The chain is Small ribosomal subunit protein uS13 from Dichelobacter nodosus (strain VCS1703A).